The primary structure comprises 445 residues: Phosphoglucosamine mutase (445 aa).

The active-site Phosphoserine intermediate is Ser-102. Residues Ser-102, Asp-241, Asp-243, and Asp-245 each contribute to the Mg(2+) site. Ser-102 bears the Phosphoserine mark.

The protein belongs to the phosphohexose mutase family. Requires Mg(2+) as cofactor. Post-translationally, activated by phosphorylation.

The catalysed reaction is alpha-D-glucosamine 1-phosphate = D-glucosamine 6-phosphate. Its function is as follows. Catalyzes the conversion of glucosamine-6-phosphate to glucosamine-1-phosphate. This chain is Phosphoglucosamine mutase, found in Rhodococcus jostii (strain RHA1).